The chain runs to 149 residues: MVYKTKLGEMEISDESIFTFEKGIPGFEHLRKFALVFPQETFPIGWLLSLEDPEVGLPVVDPKLVRADYDPVVLSEDLEEIEAENQEALLFFCVLTIPPGKPEKTTINLRAPIILNQKKKKGIQTILENEDYQLRHLLSEEMERSKTVV.

The protein belongs to the FliW family. Interacts with translational regulator CsrA and flagellin(s).

It is found in the cytoplasm. Its function is as follows. Acts as an anti-CsrA protein, binds CsrA and prevents it from repressing translation of its target genes, one of which is flagellin. Binds to flagellin and participates in the assembly of the flagellum. In Thermotoga petrophila (strain ATCC BAA-488 / DSM 13995 / JCM 10881 / RKU-1), this protein is Flagellar assembly factor FliW.